The chain runs to 98 residues: HssA/B-like protein 34 (98 aa).

Disordered stretches follow at residues 1-26 (MTLFSSISSMSSSMTSSRSSIASFGS) and 60-98 (AKSSGGSCGGKGGSHNHGHGHGHGPHGHGGKGSGGSCSC). Positions 60-72 (AKSSGGSCGGKGG) are enriched in gly residues. Residues 73–88 (SHNHGHGHGHGPHGHG) show a composition bias toward basic residues. Residues 89-98 (GKGSGGSCSC) are compositionally biased toward gly residues.

The protein belongs to the hssA/B family.

The polypeptide is HssA/B-like protein 34 (hssl34) (Dictyostelium discoideum (Social amoeba)).